The sequence spans 162 residues: NADH-quinone oxidoreductase subunit I 2 (162 aa).

4Fe-4S ferredoxin-type domains follow at residues 53 to 83 and 93 to 122; these read LRRY…IESE and TRYD…ETRI. Positions 63, 66, 69, 73, 102, 105, 108, and 112 each coordinate [4Fe-4S] cluster.

It belongs to the complex I 23 kDa subunit family. In terms of assembly, NDH-1 is composed of 14 different subunits. Subunits NuoA, H, J, K, L, M, N constitute the membrane sector of the complex. The cofactor is [4Fe-4S] cluster.

The protein localises to the cell inner membrane. It catalyses the reaction a quinone + NADH + 5 H(+)(in) = a quinol + NAD(+) + 4 H(+)(out). NDH-1 shuttles electrons from NADH, via FMN and iron-sulfur (Fe-S) centers, to quinones in the respiratory chain. The immediate electron acceptor for the enzyme in this species is believed to be ubiquinone. Couples the redox reaction to proton translocation (for every two electrons transferred, four hydrogen ions are translocated across the cytoplasmic membrane), and thus conserves the redox energy in a proton gradient. The protein is NADH-quinone oxidoreductase subunit I 2 of Nitrosospira multiformis (strain ATCC 25196 / NCIMB 11849 / C 71).